Here is a 65-residue protein sequence, read N- to C-terminus: Protein MalX (65 aa).

The protein is Protein MalX (malX) of Klebsiella pneumoniae.